An 885-amino-acid polypeptide reads, in one-letter code: Protein transport protein SEC24-1 (885 aa).

4 residues coordinate Zn(2+): cysteine 164, cysteine 167, cysteine 186, and cysteine 189. The zinc finger-like stretch occupies residues 164–189; the sequence is CRRCRSYLNPFVAFIEQGRRWQCNIC. The disordered stretch occupies residues 296 to 332; the sequence is DDYEESDDDDDEDDDDEEEDNEEEEEEEEDEEDDDDS.

This sequence belongs to the SEC23/SEC24 family. SEC24 subfamily. As to quaternary structure, the COPII coat is composed of at least 5 proteins: the SEC23/24 complex, the SEC13/31 complex, and the protein SAR1. Golgi apparatus membrane; Peripheral membrane protein; Cytoplasmic side.

The protein localises to the cytoplasm. It is found in the cytoplasmic vesicle. The protein resides in the COPII-coated vesicle membrane. Its subcellular location is the endoplasmic reticulum membrane. It localises to the golgi apparatus membrane. In terms of biological role, component of the coat protein complex II (COPII) which promotes the formation of transport vesicles from the endoplasmic reticulum (ER). The coat has two main functions, the physical deformation of the endoplasmic reticulum membrane into vesicles and the selection of cargo molecules. The chain is Protein transport protein SEC24-1 (SEC241) from Saccharomyces uvarum (strain ATCC 76518 / CBS 7001 / CLIB 283 / NBRC 10550 / MCYC 623 / NCYC 2669 / NRRL Y-11845) (Yeast).